Consider the following 251-residue polypeptide: Hydroxyacylglutathione hydrolase (251 aa).

Residues histidine 53, histidine 55, aspartate 57, histidine 58, histidine 110, aspartate 127, and histidine 165 each contribute to the Zn(2+) site.

It belongs to the metallo-beta-lactamase superfamily. Glyoxalase II family. In terms of assembly, monomer. It depends on Zn(2+) as a cofactor.

It catalyses the reaction an S-(2-hydroxyacyl)glutathione + H2O = a 2-hydroxy carboxylate + glutathione + H(+). It participates in secondary metabolite metabolism; methylglyoxal degradation; (R)-lactate from methylglyoxal: step 2/2. Thiolesterase that catalyzes the hydrolysis of S-D-lactoyl-glutathione to form glutathione and D-lactic acid. This chain is Hydroxyacylglutathione hydrolase, found in Enterobacter sp. (strain 638).